The following is a 1322-amino-acid chain: FERM and PDZ domain-containing protein 4 (1322 aa).

One can recognise a WW domain in the interval 33–66; it reads QVPPYGWEMTANRDGRDYFINHMTQAIPFDDPRL. In terms of domain architecture, PDZ spans 78–155; it reads KVEMRRDPVL…SILLTVIQPY (78 aa). The FERM domain occupies 204–519; the sequence is NVLKVYLENG…GYYRLLVDSR (316 aa). 7 disordered regions span residues 809–847, 900–927, 952–983, 1027–1080, 1105–1148, 1160–1180, and 1207–1227; these read APPPGFRDSSDEEDSQSQAASFPEDKEKGSSLQNDEIPV, SPESSSDSGNETNSSEMTESSELATAQK, EFPASKTPAGGLPPKSSHALAARPATDLPPKV, RKSK…STFN, SGLE…GQGD, AKDLDNPEDADSSTCDHPSKL, and HFSLQSSQGSSVDAGCGTGSS. Residues 902-921 are compositionally biased toward low complexity; that stretch reads ESSSDSGNETNSSEMTESSE. The span at 1041 to 1054 shows a compositional bias: low complexity; that stretch reads NGNTTGKKQQGTKT. Positions 1067–1080 are enriched in polar residues; it reads TVSSRDSQHLSTFN. The segment covering 1207–1217 has biased composition (polar residues); that stretch reads HFSLQSSQGSS.

Interacts (via C-terminus) with DLG1, DLG2, DLG3 and DLG4/PSD95. Interacts (via N-terminus) with ARHGEF7; the interaction is mediated by the PDZ domain. Interacts with GPSM2 (via TPR repeat region).

It localises to the cell projection. The protein resides in the dendritic spine. Functionally, positive regulator of dendritic spine morphogenesis and density. Required for the maintenance of excitatory synaptic transmission. Binds phosphatidylinositol 4,5-bisphosphate. This is FERM and PDZ domain-containing protein 4 (FRMPD4) from Homo sapiens (Human).